We begin with the raw amino-acid sequence, 530 residues long: Hyccin 2 (530 aa).

Threonine 30 and threonine 306 each carry phosphothreonine. A phosphoserine mark is found at serine 321 and serine 341. The interval 328-410 is disordered; that stretch reads RREGAEGVNG…DSVVRKQYVQ (83 aa). The segment covering 353-373 has biased composition (polar residues); sequence SGASLSSQPIGTKPSSSSQRG. Phosphoserine occurs at positions 430, 442, 444, and 491. Residues 498 to 530 form a disordered region; it reads GQAGEGKELLSPGAPLTKQSRSPSFNMQLISQV. Polar residues predominate over residues 514–530; it reads TKQSRSPSFNMQLISQV.

This sequence belongs to the Hyccin family. Component of a phosphatidylinositol 4-kinase (PI4K) complex, composed of PI4KA, EFR3 (EFR3A or EFR3B), TTC7 (TTC7A or TTC7B) and HYCC (HYCC1 or HYCC2).

The protein localises to the cytoplasm. It localises to the cytosol. The protein resides in the cell membrane. Its function is as follows. Component of a complex required to localize phosphatidylinositol 4-kinase (PI4K) to the plasma membrane. The protein is Hyccin 2 (HYCC2) of Pongo abelii (Sumatran orangutan).